The following is a 475-amino-acid chain: Doublecortin domain-containing protein 2 (475 aa).

2 Doublecortin domains span residues 17-100 and 139-221; these read KSVL…LNYL and CTIF…LPYS. The interval 234-475 is disordered; sequence YGQKASSLPP…ESNKASSAVA (242 aa). Residues 252 to 272 are compositionally biased toward polar residues; sequence GSGNYRQSKSTIGSSDNSSPQ. Ser270 is subject to Phosphoserine. Residues 353–365 show a composition bias toward basic and acidic residues; that stretch reads EKTSKDANQKDDF. Positions 407 to 419 are enriched in acidic residues; that stretch reads TDEENGEELDQVT. Residues 455-475 show a composition bias toward polar residues; it reads TVTSPQENEGNESNKASSAVA.

In terms of assembly, interacts with DVL1, DVL2 and DVL3. In terms of tissue distribution, expressed in hair cells of the inner ear.

It is found in the cell projection. The protein localises to the cilium. Its subcellular location is the cytoplasm. It localises to the cytoskeleton. The protein resides in the cilium axoneme. It is found in the kinocilium. In terms of biological role, protein that plays a role in the inhibition of canonical Wnt signaling pathway. May be involved in neuronal migration during development of the cerebral neocortex. Involved in the control of ciliogenesis and ciliary length. The sequence is that of Doublecortin domain-containing protein 2 (Dcdc2) from Rattus norvegicus (Rat).